A 280-amino-acid chain; its full sequence is Bifunctional protein FolD (280 aa).

NADP(+) contacts are provided by residues 164–166, serine 189, and valine 230; that span reads GRS.

The protein belongs to the tetrahydrofolate dehydrogenase/cyclohydrolase family. In terms of assembly, homodimer.

It catalyses the reaction (6R)-5,10-methylene-5,6,7,8-tetrahydrofolate + NADP(+) = (6R)-5,10-methenyltetrahydrofolate + NADPH. It carries out the reaction (6R)-5,10-methenyltetrahydrofolate + H2O = (6R)-10-formyltetrahydrofolate + H(+). It participates in one-carbon metabolism; tetrahydrofolate interconversion. In terms of biological role, catalyzes the oxidation of 5,10-methylenetetrahydrofolate to 5,10-methenyltetrahydrofolate and then the hydrolysis of 5,10-methenyltetrahydrofolate to 10-formyltetrahydrofolate. This is Bifunctional protein FolD from Geotalea uraniireducens (strain Rf4) (Geobacter uraniireducens).